The following is a 499-amino-acid chain: Guanosine-5'-triphosphate,3'-diphosphate pyrophosphatase (499 aa).

It belongs to the GppA/Ppx family. GppA subfamily.

The catalysed reaction is guanosine 3'-diphosphate 5'-triphosphate + H2O = guanosine 3',5'-bis(diphosphate) + phosphate + H(+). Its pathway is purine metabolism; ppGpp biosynthesis; ppGpp from GTP: step 2/2. Its function is as follows. Catalyzes the conversion of pppGpp to ppGpp. Guanosine pentaphosphate (pppGpp) is a cytoplasmic signaling molecule which together with ppGpp controls the 'stringent response', an adaptive process that allows bacteria to respond to amino acid starvation, resulting in the coordinated regulation of numerous cellular activities. This chain is Guanosine-5'-triphosphate,3'-diphosphate pyrophosphatase, found in Sodalis glossinidius (strain morsitans).